The sequence spans 357 residues: UPF0744 protein C106.03 (357 aa).

Position 282 is a phosphoserine (Ser-282).

The protein belongs to the UPF0744 family.

It is found in the cytoplasm. The sequence is that of UPF0744 protein C106.03 from Schizosaccharomyces pombe (strain 972 / ATCC 24843) (Fission yeast).